A 327-amino-acid chain; its full sequence is Phenylalanine--tRNA ligase alpha subunit (327 aa).

Residue glutamate 252 coordinates Mg(2+).

It belongs to the class-II aminoacyl-tRNA synthetase family. Phe-tRNA synthetase alpha subunit type 1 subfamily. Tetramer of two alpha and two beta subunits. It depends on Mg(2+) as a cofactor.

The protein resides in the cytoplasm. The enzyme catalyses tRNA(Phe) + L-phenylalanine + ATP = L-phenylalanyl-tRNA(Phe) + AMP + diphosphate + H(+). In Klebsiella pneumoniae subsp. pneumoniae (strain ATCC 700721 / MGH 78578), this protein is Phenylalanine--tRNA ligase alpha subunit.